A 51-amino-acid chain; its full sequence is ATP synthase subunit epsilon-like protein, mitochondrial (51 aa).

Residue K21 is modified to N6-acetyllysine.

The protein belongs to the eukaryotic ATPase epsilon family. In terms of assembly, F-type ATPases have 2 components, CF(1) - the catalytic core - and CF(0) - the membrane proton channel. CF(1) has five subunits: alpha(3), beta(3), gamma(1), delta(1), epsilon(1). CF(0) seems to have nine subunits: a, b, c, d, e, f, g, F6 and 8 (or A6L).

The protein resides in the mitochondrion inner membrane. Functionally, mitochondrial membrane ATP synthase (F(1)F(0) ATP synthase or Complex V) produces ATP from ADP in the presence of a proton gradient across the membrane which is generated by electron transport complexes of the respiratory chain. F-type ATPases consist of two structural domains, F(1) - containing the extramembraneous catalytic core, and F(0) - containing the membrane proton channel, linked together by a central stalk and a peripheral stalk. During catalysis, ATP synthesis in the catalytic domain of F(1) is coupled via a rotary mechanism of the central stalk subunits to proton translocation. Part of the complex F(1) domain and of the central stalk which is part of the complex rotary element. Rotation of the central stalk against the surrounding alpha(3)beta(3) subunits leads to hydrolysis of ATP in three separate catalytic sites on the beta subunits. The protein is ATP synthase subunit epsilon-like protein, mitochondrial of Homo sapiens (Human).